Reading from the N-terminus, the 370-residue chain is Early nodulin-like protein 1 (370 aa).

A signal peptide spans 1–27; that stretch reads MSAIMKSLCFSFLILASFATFFSVADA. A Phytocyanin domain is found at 28–129; it reads WRFNVGGNGA…GQKLIVVVLA (102 aa). Asn58 is a glycosylation site (N-linked (GlcNAc...) asparagine). Cys83 and Cys117 are joined by a disulfide. Over residues 135 to 175 the composition is skewed to low complexity; that stretch reads SAPAHSPVPSVSPTQPPKSHSPVSPVAPASAPSKSQPPRSS. The interval 135–347 is disordered; the sequence is SAPAHSPVPS…PAPSPRTNSA (213 aa). A compositionally biased stretch (polar residues) spans 176 to 194; that stretch reads VSPAQPPKSSSPISHTPAL. 2 stretches are compositionally biased toward low complexity: residues 195-205 and 215-290; these read SPSHATSHSPA and SPVS…QSPA. Pro residues predominate over residues 291–305; it reads TPSPMTPQSPSPVSS. Residues 306-318 show a composition bias toward low complexity; sequence PSPDQSAAPSDQS. The segment covering 319-334 has biased composition (polar residues); it reads TPLAPSPSETTPTADN. An N-linked (GlcNAc...) asparagine glycan is attached at Asn334. Asn345 carries the GPI-anchor amidated asparagine lipid modification. Residues 346 to 370 constitute a propeptide, removed in mature form; sequence SASGLAVTSVMSTLFSATFTFLMFA.

Belongs to the early nodulin-like (ENODL) family. Mostly expressed in stems, leaves and flowers, and, to a lower extent, in seedlings, roots and seeds.

It localises to the cell membrane. May act as a carbohydrate transporter. This is Early nodulin-like protein 1 from Arabidopsis thaliana (Mouse-ear cress).